The primary structure comprises 136 residues: Translation initiation factor 5A (136 aa).

Position 37 is a hypusine (Lys-37).

Belongs to the eIF-5A family.

It is found in the cytoplasm. Functionally, functions by promoting the formation of the first peptide bond. The polypeptide is Translation initiation factor 5A (eIF5A) (Thermococcus onnurineus (strain NA1)).